Here is a 489-residue protein sequence, read N- to C-terminus: Ribulose-1,5 bisphosphate carboxylase/oxygenase large subunit N-methyltransferase, chloroplastic (489 aa).

A chloroplast-targeting transit peptide spans 1-37 (MATIFSGGSVSPFLFHTNKGTSFTPKAPILHLKRSFS). The region spanning 64–288 (EGVITAKTPV…AGEQVYIQYD (225 aa)) is the SET domain. S-adenosyl-L-methionine-binding positions include 80-82 (EGL) and R222. Residues R222, R226, and D239 each coordinate substrate. 242-243 (NH) contacts S-adenosyl-L-methionine. Substrate contacts are provided by Y254, Y287, and Y300.

It belongs to the class V-like SAM-binding methyltransferase superfamily. Plant protein-lysine LSMT methyltransferase family. Homotrimer. As to expression, highly expressed in leaf.

Its subcellular location is the plastid. The protein resides in the chloroplast. It carries out the reaction L-lysyl-[ribulose-1,5-bisphosphate carboxylase] + 3 S-adenosyl-L-methionine = N(6),N(6),N(6)-trimethyl-L-lysyl-[ribulose-1,5-bisphosphate carboxylase] + 3 S-adenosyl-L-homocysteine + 3 H(+). It catalyses the reaction [fructose-bisphosphate aldolase]-L-lysine + 3 S-adenosyl-L-methionine = [fructose-bisphosphate aldolase]-N(6),N(6),N(6)-trimethyl-L-lysine + 3 S-adenosyl-L-homocysteine + 3 H(+). Its function is as follows. Methylates 'Lys-14' of the large subunit of RuBisCO. Can also use with lower efficiency chloroplastic fructose-bisphosphate aldolases and gamma-tocopherol methyltransferase as substrates, but not a cytosolic aldolase. The sequence is that of Ribulose-1,5 bisphosphate carboxylase/oxygenase large subunit N-methyltransferase, chloroplastic (RBCMT) from Pisum sativum (Garden pea).